Reading from the N-terminus, the 140-residue chain is Con-Ins Im2 (140 aa).

A signal peptide spans 1-29 (MALTWPSSPPVLLTLLLSLLALQLCAVYG). 4 cysteine pairs are disulfide-bonded: Cys35/Cys123, Cys50/Cys126, Cys62/Cys139, and Cys125/Cys130. Residues 64–110 (PRGYVSNWFTKRSAPNKPAETFVDQNLRGVLLNKREALSYLRPREPR) constitute a propeptide, c peptide. Glu134 is modified (4-carboxyglutamate; partial).

Belongs to the insulin family. In terms of assembly, heterodimer of A and B chains; disulfide-linked. Expressed by the venom gland.

The protein localises to the secreted. Its function is as follows. This venom insulin facilitates prey capture by rapidly inducing hypoglycemic shock. Intraperitoneal injection of this peptide into zebrafish lowers blood glucose with the same potency than human insulin. In vivo, when applied to water, this peptide reduces overall locomotor activity of zebrafish larvae, observed as a significant decrease in the percentage of time spent swimming and movement frequency. In Conus imperialis (Imperial cone), this protein is Con-Ins Im2.